Reading from the N-terminus, the 257-residue chain is NAD-capped RNA hydrolase NudC (257 aa).

R69 provides a ligand contact to substrate. Zn(2+) contacts are provided by C98 and C101. A substrate-binding site is contributed by E111. 2 residues coordinate Zn(2+): C116 and C119. Y124 is a substrate binding site. Residues 125 to 248 form the Nudix hydrolase domain; it reads PQIAPCIIVA…TVARRLIEDT (124 aa). 3 residues coordinate a divalent metal cation: A158, E174, and E178. The Nudix box motif lies at 159 to 180; it reads GFVEVGETLEQAVAREVMEESG. Residue 192–199 coordinates substrate; the sequence is QPWPFPQS. A divalent metal cation is bound at residue E219. A241 contributes to the substrate binding site.

It belongs to the Nudix hydrolase family. NudC subfamily. In terms of assembly, homodimer. Requires Mg(2+) as cofactor. Mn(2+) is required as a cofactor. It depends on Zn(2+) as a cofactor.

The enzyme catalyses a 5'-end NAD(+)-phospho-ribonucleoside in mRNA + H2O = a 5'-end phospho-adenosine-phospho-ribonucleoside in mRNA + beta-nicotinamide D-ribonucleotide + 2 H(+). The catalysed reaction is NAD(+) + H2O = beta-nicotinamide D-ribonucleotide + AMP + 2 H(+). It carries out the reaction NADH + H2O = reduced beta-nicotinamide D-ribonucleotide + AMP + 2 H(+). MRNA decapping enzyme that specifically removes the nicotinamide adenine dinucleotide (NAD) cap from a subset of mRNAs by hydrolyzing the diphosphate linkage to produce nicotinamide mononucleotide (NMN) and 5' monophosphate mRNA. The NAD-cap is present at the 5'-end of some mRNAs and stabilizes RNA against 5'-processing. Has preference for mRNAs with a 5'-end purine. Catalyzes the hydrolysis of a broad range of dinucleotide pyrophosphates. The chain is NAD-capped RNA hydrolase NudC from Salmonella typhimurium (strain LT2 / SGSC1412 / ATCC 700720).